The sequence spans 556 residues: Formate--tetrahydrofolate ligase (556 aa).

Residue 64-71 (TPAGEGKT) coordinates ATP.

The protein belongs to the formate--tetrahydrofolate ligase family.

It catalyses the reaction (6S)-5,6,7,8-tetrahydrofolate + formate + ATP = (6R)-10-formyltetrahydrofolate + ADP + phosphate. Its pathway is one-carbon metabolism; tetrahydrofolate interconversion. The polypeptide is Formate--tetrahydrofolate ligase (Actinobacillus pleuropneumoniae serotype 5b (strain L20)).